The chain runs to 329 residues: MRTDWTREEIAALFDLPFDELMWEAQGVHRRHHARGEIQLCTLLSIKTGGCVEDCGYCSQSAHADTGLKATKLMDVRAVLQAAAQAKDAGSKRFCMGAAWRNPKDRDMPAIVEMIEGVRAMGMETCMTLGMLSKEQAQVLGMAGLDYYNHNIDTSPEHYGNVITTRSFQDRLDTLEEVRAAGINVCSGGIVGMGETRADRVGFIHTLATLPEHPGSVPINALVPVKGTVLGDMLADTPLAKIDDIEFVRTVAVARITMPKSMVRLSAGRESMSEATQALCFMAGANSIFTGDKLLTTANAGDNADAALFAKLGLRPMESEEPMRMEAAE.

The Radical SAM core domain occupies 36-260 (GEIQLCTLLS…VAVARITMPK (225 aa)). Residues cysteine 51, cysteine 55, and cysteine 58 each contribute to the [4Fe-4S] cluster site. Positions 95, 126, 186, and 264 each coordinate [2Fe-2S] cluster.

This sequence belongs to the radical SAM superfamily. Biotin synthase family. Homodimer. [4Fe-4S] cluster serves as cofactor. It depends on [2Fe-2S] cluster as a cofactor.

It catalyses the reaction (4R,5S)-dethiobiotin + (sulfur carrier)-SH + 2 reduced [2Fe-2S]-[ferredoxin] + 2 S-adenosyl-L-methionine = (sulfur carrier)-H + biotin + 2 5'-deoxyadenosine + 2 L-methionine + 2 oxidized [2Fe-2S]-[ferredoxin]. It participates in cofactor biosynthesis; biotin biosynthesis; biotin from 7,8-diaminononanoate: step 2/2. Its function is as follows. Catalyzes the conversion of dethiobiotin (DTB) to biotin by the insertion of a sulfur atom into dethiobiotin via a radical-based mechanism. The protein is Biotin synthase of Sphingopyxis alaskensis (strain DSM 13593 / LMG 18877 / RB2256) (Sphingomonas alaskensis).